The primary structure comprises 77 residues: MKLIIFTGLVLFAIVSLIEAEEESGRVCIPLNGECSKSPDKCCDNINCDCYLRFEKGVQAGRPCFCTEKDVIFERDE.

Residues 1 to 20 (MKLIIFTGLVLFAIVSLIEA) form the signal peptide. The propeptide occupies 21–26 (EEESGR).

The protein belongs to the neurotoxin 19 (CSTX) family. 09 (U10-Lctx) subfamily. In terms of processing, contains 4 disulfide bonds. As to expression, expressed by the venom gland.

The protein resides in the secreted. The polypeptide is U10-lycotoxin-Ls1b (Lycosa singoriensis (Wolf spider)).